A 122-amino-acid chain; its full sequence is MTNVPDGLKYTKTHEWYKVDNGIATVGITDYAQSQMTDIVYVDLPEVGDKKKVGDVLLTIESVKSAEDVYSPLTGEITEVNQELTKHPENINKDPYGNWLVKMKVEKEGEYLTAEQYRKLIQ.

Residues 23–104 form the Lipoyl-binding domain; it reads IATVGITDYA…PYGNWLVKMK (82 aa). Lys64 is modified (N6-lipoyllysine).

It belongs to the GcvH family. As to quaternary structure, the glycine cleavage system is composed of four proteins: P, T, L and H. (R)-lipoate is required as a cofactor.

In terms of biological role, the glycine cleavage system catalyzes the degradation of glycine. The H protein shuttles the methylamine group of glycine from the P protein to the T protein. The polypeptide is Probable glycine cleavage system H protein (Thermoplasma volcanium (strain ATCC 51530 / DSM 4299 / JCM 9571 / NBRC 15438 / GSS1)).